Reading from the N-terminus, the 1748-residue chain is Anaphase-promoting complex subunit 1 (1748 aa).

Disordered regions lie at residues 1–24 (MTSKPSTRNDYLPRETHNGEYTGD) and 1435–1479 (VSGV…DPTA). A compositionally biased stretch (polar residues) spans 1435–1450 (VSGVTQVTSNTNTPGN). Positions 1451–1468 (SDRERVDETAASLDDERS) are enriched in basic and acidic residues. Position 1462 is a phosphoserine (serine 1462).

Belongs to the APC1 family. In terms of assembly, the APC/C is composed of at least 13 subunits that stay tightly associated throughout the cell cycle: APC1, APC2, APC4, APC5, APC9, APC11, CDC16, CDC23, CDC26, CDC27, DOC1, MND2 and SWM1. APC1 interacts directly with MND2.

It is found in the nucleus. Its subcellular location is the cytoplasm. The protein localises to the cytoskeleton. The protein resides in the spindle pole. It participates in protein modification; protein ubiquitination. Its function is as follows. Component of the anaphase promoting complex/cyclosome (APC/C), a cell cycle-regulated E3 ubiquitin-protein ligase complex that controls progression through mitosis and the G1 phase of the cell cycle. The APC/C is thought to confer substrate specificity and, in the presence of ubiquitin-conjugating E2 enzymes, it catalyzes the formation of protein-ubiquitin conjugates that are subsequently degraded by the 26S proteasome. In early mitosis, the APC/C is activated by CDC20 and targets securin PDS1, the B-type cyclin CLB5, and other anaphase inhibitory proteins for proteolysis, thereby triggering the separation of sister chromatids at the metaphase-to-anaphase transition. In late mitosis and in G1, degradation of CLB5 allows activation of the APC/C by CDH1, which is needed to destroy CDC20 and the B-type cyclin CLB2 to allow exit from mitosis and creating the low CDK state necessary for cytokinesis and for reforming prereplicative complexes in G1 prior to another round of replication. The sequence is that of Anaphase-promoting complex subunit 1 (APC1) from Saccharomyces cerevisiae (strain ATCC 204508 / S288c) (Baker's yeast).